The chain runs to 152 residues: Large ribosomal subunit protein bL9 (152 aa).

The protein belongs to the bacterial ribosomal protein bL9 family.

Its function is as follows. Binds to the 23S rRNA. The sequence is that of Large ribosomal subunit protein bL9 from Synechococcus sp. (strain RCC307).